Here is a 423-residue protein sequence, read N- to C-terminus: 5-hydroxytryptamine receptor 1A (423 aa).

At 1 to 38 (MEGLSPRQGNNTTSSEGPFGTLGNATGISDVTFSYQVI) the chain is on the extracellular side. N-linked (GlcNAc...) asparagine glycans are attached at residues N10, N11, and N24. A helical transmembrane segment spans residues 39–59 (TSLLLGTLIFCAVLGNACVVA). Residues 60 to 73 (AIALERSLQNVANY) lie on the Cytoplasmic side of the membrane. A helical transmembrane segment spans residues 74-98 (LIGSLAVTDLMVSVLVLPMAALYQV). Residues 99–107 (LNKWTLGQV) are Extracellular-facing. The chain crosses the membrane as a helical span at residues 108 to 132 (TCDLFIALDVLCCTSSILHLCAIAL). A disulfide bridge links C109 with C187. Serotonin-binding residues include D116 and C120. The DRY motif; important for ligand-induced conformation changes motif lies at 133–135 (DRY). The Cytoplasmic portion of the chain corresponds to 133–152 (DRYWAITDPIDYVNKRTPRR). A helical transmembrane segment spans residues 153–174 (AAALISLTWLIGFLISIPPMLG). Residues 175 to 193 (WRTPEDRSDPDACTISKDH) are Extracellular-facing. The helical transmembrane segment at 194–216 (GYTIYSTFGAFYIPLLLMLVLYG) threads the bilayer. Residues 217 to 346 (RIFRAARFRI…LARERKTVKT (130 aa)) are Cytoplasmic-facing. The interval 235–277 (RKGADARSGVSPAPQPRKSVNGEPGGREWRQGPGSQAGGPLCT) is disordered. K345, T346, and G352 together coordinate 1D-myo-inositol 4-phosphate. The helical transmembrane segment at 347 to 370 (LGIIMGTFILCWLPFFIVALVLPF) threads the bilayer. Topologically, residues 371-378 (CESSCHMP) are extracellular. A helical transmembrane segment spans residues 379-403 (TLLGAIINWLGYSNSLLNPVIYAYF). The NPxxY motif; important for ligand-induced conformation changes and signaling signature appears at 396-400 (NPVIY). Residues F403, N404, and K405 each contribute to the 1D-myo-inositol 4-phosphate site. The Cytoplasmic segment spans residues 404-423 (NKDFQNAFKKIVRCKFCRRR).

This sequence belongs to the G-protein coupled receptor 1 family. 5-hydroxytryptamine receptor subfamily. HTR1A sub-subfamily. Heterodimer; heterodimerizes with GPER1. Interacts with YIF1B. Interacts with GPR39 and GALR1.

The protein resides in the cell membrane. Its subcellular location is the cell projection. It is found in the dendrite. Its activity is regulated as follows. G-protein coupled receptor activity is regulated by lipids: phosphatidylinositol 4-phosphate increases HTR1A-mediated activity. In terms of biological role, G-protein coupled receptor for 5-hydroxytryptamine (serotonin). Also functions as a receptor for various drugs and psychoactive substances. Ligand binding causes a conformation change that triggers signaling via guanine nucleotide-binding proteins (G proteins) and modulates the activity of downstream effectors, such as adenylate cyclase. HTR1A is coupled to G(i)/G(o) G alpha proteins and mediates inhibitory neurotransmission: signaling inhibits adenylate cyclase activity and activates a phosphatidylinositol-calcium second messenger system that regulates the release of Ca(2+) ions from intracellular stores. Beta-arrestin family members regulate signaling by mediating both receptor desensitization and resensitization processes. The sequence is that of 5-hydroxytryptamine receptor 1A (HTR1A) from Canis lupus familiaris (Dog).